The primary structure comprises 166 residues: Anaerobic nitrite reductase NSHB1 (166 aa).

The Globin domain maps to 13-163; it reads SFSEEQEALV…LVAAIKQEMK (151 aa). The Homodimerization signature appears at 46–50; it reads EVAPS. Positions 56, 70, 74, 104, 108, and 109 each coordinate heme b. Residues 116 to 128 carry the Homodimerization motif; it reads DAHFEVVKFALLD.

Belongs to the plant globin family. As to quaternary structure, homodimer. Heme b is required as a cofactor. As to expression, expressed in coleoptiles, embryos, leaves, seminal roots and roots.

It is found in the cytoplasm. It localises to the nucleus. The enzyme catalyses Fe(III)-heme b-[protein] + nitric oxide + H2O = Fe(II)-heme b-[protein] + nitrite + 2 H(+). With respect to regulation, slowly reduced by ascorbic acid (AA); this reaction may become a source of nitric oxide (NO) during hypoxia. Its function is as follows. Phytoglobin that reduces nitrite to nitric oxide under anoxic conditions (e.g. during flooding or in waterlogged soil). May not function as an oxygen storage or transport protein. Has an unusually high affinity for O(2) through a hexacoordinate heme iron because of a very low dissociation constant. This is Anaerobic nitrite reductase NSHB1 from Oryza sativa subsp. japonica (Rice).